The following is a 477-amino-acid chain: Protein nucleotidyltransferase YdiU (477 aa).

8 residues coordinate ATP: Gly-89, Gly-91, Arg-92, Lys-112, Asp-124, Gly-125, Arg-178, and Arg-185. Asp-257 acts as the Proton acceptor in catalysis. Positions 258 and 267 each coordinate Mg(2+). Asp-267 lines the ATP pocket.

It belongs to the SELO family. Mg(2+) is required as a cofactor. The cofactor is Mn(2+).

The enzyme catalyses L-seryl-[protein] + ATP = 3-O-(5'-adenylyl)-L-seryl-[protein] + diphosphate. It carries out the reaction L-threonyl-[protein] + ATP = 3-O-(5'-adenylyl)-L-threonyl-[protein] + diphosphate. It catalyses the reaction L-tyrosyl-[protein] + ATP = O-(5'-adenylyl)-L-tyrosyl-[protein] + diphosphate. The catalysed reaction is L-histidyl-[protein] + UTP = N(tele)-(5'-uridylyl)-L-histidyl-[protein] + diphosphate. The enzyme catalyses L-seryl-[protein] + UTP = O-(5'-uridylyl)-L-seryl-[protein] + diphosphate. It carries out the reaction L-tyrosyl-[protein] + UTP = O-(5'-uridylyl)-L-tyrosyl-[protein] + diphosphate. Its function is as follows. Nucleotidyltransferase involved in the post-translational modification of proteins. It can catalyze the addition of adenosine monophosphate (AMP) or uridine monophosphate (UMP) to a protein, resulting in modifications known as AMPylation and UMPylation. In Synechocystis sp. (strain ATCC 27184 / PCC 6803 / Kazusa), this protein is Protein nucleotidyltransferase YdiU.